A 502-amino-acid chain; its full sequence is MSIRAEEISALIKQQIENYESQIQVSDVGTVIQVGDGIARAHGLDNVMSGEAVEFANAVMGMALNLEENNVGIVILGPYTGIKEGDEVRRTGRIMEVPVGETLIGRVVNPLGQPVDGLGPVETTETRPIESRAPGVMDRRSVHEPLQTGIKAIDALVPIGRGQRELIIGDRQTGKTSVAIDTIINQKDQNMICIYVAIGQKESTVATVVETLAKHGAPDYTIVVTASASQPAPLLFLAPYAGVAMGEYFMIMGKHVLVVIDDLSKQAAAYRQLSLLLRRPPGREAYPGDIFYLHSRLLERAAKLSDAKGGGSLTALPFVETQAGDISAYIPTNVISITDGQIFLQSDLFFSGVRPAINAGLSVSRVGGAAQIKAMKKVAGTLRLDLAAYRELEAFAQFGSDLDKATQANVARGARTVEVLKQDLHQPIPVEKQVLIIYALTRGFLDDIPVEDVRRFEKEFYLWLDQNGQHLLEHIRTTKDLPNEDDLNQAIEAFKKTFVVSQ.

169-176 (GDRQTGKT) is a binding site for ATP.

It belongs to the ATPase alpha/beta chains family. In terms of assembly, F-type ATPases have 2 components, CF(1) - the catalytic core - and CF(0) - the membrane proton channel. CF(1) has five subunits: alpha(3), beta(3), gamma(1), delta(1), epsilon(1). CF(0) has three main subunits: a(1), b(2) and c(9-12). The alpha and beta chains form an alternating ring which encloses part of the gamma chain. CF(1) is attached to CF(0) by a central stalk formed by the gamma and epsilon chains, while a peripheral stalk is formed by the delta and b chains.

Its subcellular location is the cell membrane. It carries out the reaction ATP + H2O + 4 H(+)(in) = ADP + phosphate + 5 H(+)(out). Its function is as follows. Produces ATP from ADP in the presence of a proton gradient across the membrane. The alpha chain is a regulatory subunit. This chain is ATP synthase subunit alpha, found in Bacillus sp. (strain PS3).